Reading from the N-terminus, the 137-residue chain is Histone H2B.4 (137 aa).

Residues 1 to 37 (MAPKAEKKPAEKKPTEEKAEKKPRAEKRVPGKEGGEK) show a composition bias toward basic and acidic residues. The disordered stretch occupies residues 1 to 45 (MAPKAEKKPAEKKPTEEKAEKKPRAEKRVPGKEGGEKKGKKKAKK). An N6-acetyllysine mark is found at Lys-7 and Lys-27. Lys-133 is covalently cross-linked (Glycyl lysine isopeptide (Lys-Gly) (interchain with G-Cter in ubiquitin)).

This sequence belongs to the histone H2B family. In terms of assembly, the nucleosome is a histone octamer containing two molecules each of H2A, H2B, H3 and H4 assembled in one H3-H4 heterotetramer and two H2A-H2B heterodimers. The octamer wraps approximately 147 bp of DNA. In terms of processing, can be acetylated to form H2BK6ac and H2BK33ac. Monoubiquitinated to form H2BK143ub1; may give a specific tag for epigenetic transcriptional activation.

The protein resides in the nucleus. It localises to the chromosome. Core component of nucleosome. Nucleosomes wrap and compact DNA into chromatin, limiting DNA accessibility to the cellular machineries which require DNA as a template. Histones thereby play a central role in transcription regulation, DNA repair, DNA replication and chromosomal stability. DNA accessibility is regulated via a complex set of post-translational modifications of histones, also called histone code, and nucleosome remodeling. This is Histone H2B.4 from Zea mays (Maize).